The following is a 167-amino-acid chain: Ribosome maturation factor RimM (167 aa).

Positions 94–167 constitute a PRC barrel domain; sequence EENEYFIKDL…VMVVHLLEGL (74 aa).

The protein belongs to the RimM family. In terms of assembly, binds ribosomal protein uS19.

Its subcellular location is the cytoplasm. In terms of biological role, an accessory protein needed during the final step in the assembly of 30S ribosomal subunit, possibly for assembly of the head region. Essential for efficient processing of 16S rRNA. May be needed both before and after RbfA during the maturation of 16S rRNA. It has affinity for free ribosomal 30S subunits but not for 70S ribosomes. The polypeptide is Ribosome maturation factor RimM (Thermoanaerobacter pseudethanolicus (strain ATCC 33223 / 39E) (Clostridium thermohydrosulfuricum)).